Reading from the N-terminus, the 323-residue chain is Ubiquinone biosynthesis protein COQ4, mitochondrial (323 aa).

The Zn(2+) site is built by H203, D204, H207, and E219.

This sequence belongs to the COQ4 family. As to quaternary structure, component of a multi-subunit COQ enzyme complex, composed of at least COQ3, COQ4, COQ5, COQ6, COQ7 and COQ9. It depends on Zn(2+) as a cofactor.

The protein resides in the mitochondrion inner membrane. It carries out the reaction a 4-hydroxy-3-methoxy-5-(all-trans-polyprenyl)benzoate + H(+) = a 2-methoxy-6-(all-trans-polyprenyl)phenol + CO2. It participates in cofactor biosynthesis; ubiquinone biosynthesis. Functionally, lyase that catalyzes the C1-decarboxylation of 4-hydroxy-3-methoxy-5-(all-trans-polyprenyl)benzoic acid into 2-methoxy-6-(all-trans-polyprenyl)phenol during ubiquinone biosynthesis. In Eremothecium gossypii (strain ATCC 10895 / CBS 109.51 / FGSC 9923 / NRRL Y-1056) (Yeast), this protein is Ubiquinone biosynthesis protein COQ4, mitochondrial.